Consider the following 329-residue polypeptide: Pantothenate kinase (329 aa).

The disordered stretch occupies residues 1–21 (MISPVPSIPRSAHRQRPEATP). Position 107-114 (107-114 (GSVAVGKS)) interacts with ATP.

Belongs to the prokaryotic pantothenate kinase family.

It localises to the cytoplasm. It carries out the reaction (R)-pantothenate + ATP = (R)-4'-phosphopantothenate + ADP + H(+). It functions in the pathway cofactor biosynthesis; coenzyme A biosynthesis; CoA from (R)-pantothenate: step 1/5. This is Pantothenate kinase (coaA) from Streptomyces coelicolor (strain ATCC BAA-471 / A3(2) / M145).